The chain runs to 775 residues: Transposon TX1 uncharacterized 82 kDa protein (775 aa).

Positions 1 to 10 are enriched in basic and acidic residues; the sequence is MGGNKKESYK. Disordered regions lie at residues 1–46, 256–277, and 535–565; these read MGGN…ASTS, PKGQ…KTSY, and PIQD…TSTV. Positions 35 to 46 are enriched in polar residues; that stretch reads EPMSKSPIASTS. Basic and acidic residues predominate over residues 539-549; that stretch reads PADKTAGKDGE.

The sequence is that of Transposon TX1 uncharacterized 82 kDa protein from Xenopus laevis (African clawed frog).